Consider the following 352-residue polypeptide: UPF0324 membrane protein RA0957 (352 aa).

Transmembrane regions (helical) follow at residues 24-43 (VVSY…SAQF), 48-67 (YGAP…NFLS), 104-126 (LGVS…AIIV), 136-158 (LSLL…LNAV), 169-191 (LALT…PVLA), 201-223 (SGVF…FAMS), 235-257 (IVRV…VLGA), 272-294 (GFVL…AAAG), 301-318 (SRWL…KTSV), and 328-350 (HVTL…LLWY).

This sequence belongs to the UPF0324 family.

The protein localises to the cell membrane. This is UPF0324 membrane protein RA0957 from Rhizobium meliloti (strain 1021) (Ensifer meliloti).